Here is a 304-residue protein sequence, read N- to C-terminus: Murein tetrapeptide carboxypeptidase (304 aa).

Residue serine 106 is the Nucleophile of the active site. Catalysis depends on charge relay system residues glutamate 200 and histidine 270.

Belongs to the peptidase S66 family.

It is found in the cytoplasm. It carries out the reaction N-acetyl-D-glucosaminyl-N-acetylmuramoyl-L-alanyl-meso-2,6-diaminoheptanedioyl-D-alanine + H2O = N-acetyl-D-glucosaminyl-N-acetylmuramoyl-L-alanyl-meso-2,6-diaminoheptanedioate + D-alanine. Its pathway is cell wall biogenesis; peptidoglycan recycling. Functionally, releases the terminal D-alanine residue from the cytoplasmic tetrapeptide recycling product L-Ala-gamma-D-Glu-meso-Dap-D-Ala. Can also cleave D-Ala from murein derivatives containing the tetrapeptide, i.e. MurNAc-tetrapeptide, UDP-MurNAc-tetrapeptide, GlcNAc-MurNAc-tetrapeptide, and GlcNAc-anhMurNAc-tetrapeptide. Does not act on murein sacculi or cross-linked muropeptides. The tripeptides produced by the LcdA reaction can then be reused as peptidoglycan building blocks; LcdA is thereby involved in murein recycling. In Escherichia coli O6:H1 (strain CFT073 / ATCC 700928 / UPEC), this protein is Murein tetrapeptide carboxypeptidase (ldcA).